Here is a 525-residue protein sequence, read N- to C-terminus: Nuclear pore glycoprotein p62 (525 aa).

S2 is modified (N-acetylserine). 5 tandem repeats follow at residues F6–G7, F46–G47, F78–G79, F115–G116, and F143–G144. Residues F6 to G144 are 5 X 2 AA repeats of F-G. Residues L260–T293 are disordered. The segment covering A269–T293 has biased composition (low complexity). The required for centrosome localization stretch occupies residues M331 to L461. Positions M331 to L461 form a coiled coil. 2 positions are modified to phosphoserine: S411 and S421. An O-linked (GlcNAc) serine glycan is attached at S471.

The protein belongs to the nucleoporin NSP1/NUP62 family. In terms of assembly, component of the p62 complex, a complex at least composed of NUP62, NUP54, and NUP58. Interacts with NUP88. Interacts with NUTF2. Interacts with HIKESHI. Interacts with OSBPL8. Interacts with CAPG. Interacts with SAS6 and TUBG1 at the centrosome. Interacts with MCM3AP. Post-translationally, the inner channel of the NPC has a different redox environment from the cytoplasm and allows the formation of interchain disulfide bonds between some nucleoporins, the significant increase of these linkages upon oxidative stress reduces the permeability of the NPC.

The protein localises to the nucleus. Its subcellular location is the nuclear pore complex. It localises to the cytoplasm. The protein resides in the cytoskeleton. It is found in the spindle pole. The protein localises to the nucleus envelope. Its subcellular location is the microtubule organizing center. It localises to the centrosome. Functionally, essential component of the nuclear pore complex. The N-terminal is probably involved in nucleocytoplasmic transport. The C-terminal is involved in protein-protein interaction probably via coiled-coil formation, promotes its association with centrosomes and may function in anchorage of p62 to the pore complex. Plays a role in mitotic cell cycle progression by regulating centrosome segregation, centriole maturation and spindle orientation. It might be involved in protein recruitment to the centrosome after nuclear breakdown. The polypeptide is Nuclear pore glycoprotein p62 (Nup62) (Rattus norvegicus (Rat)).